A 212-amino-acid chain; its full sequence is Adenylate kinase (212 aa).

14–19 lines the ATP pocket; it reads GSGKGT. Residues 34 to 63 are NMP; it reads STGDLFRKKISEDSRFAAQIQNYLSSGSYV. AMP contacts are provided by residues T35, R40, 61 to 63, 89 to 92, and Q96; these read SYV and GYPR. The interval 126-163 is LID; that stretch reads QRLFCQKCQKSYNLLLAKPKNGLKCDLDNTDLITRNDD. R127 is an ATP binding site. The Zn(2+) site is built by C130 and C133. Residue 136–137 coordinates ATP; the sequence is SY. Zn(2+)-binding residues include C150 and D153. AMP-binding residues include R160 and R171. Residue Q199 participates in ATP binding.

This sequence belongs to the adenylate kinase family. As to quaternary structure, monomer.

The protein resides in the cytoplasm. It catalyses the reaction AMP + ATP = 2 ADP. The protein operates within purine metabolism; AMP biosynthesis via salvage pathway; AMP from ADP: step 1/1. In terms of biological role, catalyzes the reversible transfer of the terminal phosphate group between ATP and AMP. Plays an important role in cellular energy homeostasis and in adenine nucleotide metabolism. This is Adenylate kinase from Mesomycoplasma hyopneumoniae (strain 232) (Mycoplasma hyopneumoniae).